A 599-amino-acid polypeptide reads, in one-letter code: Protein ECM25 (599 aa).

The Rho-GAP domain maps to 181–359; the sequence is NRLTPLAIRQ…NLLDFFPEIA (179 aa). 3 disordered regions span residues 362-447, 468-495, and 543-563; these read ISSP…PLPI, ASSS…SSTD, and ELQE…KFSQ. 3 stretches are compositionally biased toward low complexity: residues 363-373, 396-413, and 468-483; these read SSPPSSVSSSS, TLPR…TSPT, and ASSS…KTPS. Residues 543-562 are compositionally biased toward basic and acidic residues; it reads ELQEKKKKNETTSKTADKFS.

It is found in the cytoplasm. In terms of biological role, may be involved in cell wall organization and biogenesis. The polypeptide is Protein ECM25 (ECM25) (Saccharomyces cerevisiae (strain ATCC 204508 / S288c) (Baker's yeast)).